A 142-amino-acid polypeptide reads, in one-letter code: HTH-type transcriptional regulator MntR (142 aa).

Residues 1 to 63 (MPTPSMEDYI…YEKYRGLVLT (63 aa)) enclose the HTH dtxR-type domain. Mn(2+) contacts are provided by Asp8, Glu11, His77, Glu99, Glu102, and His103.

The protein belongs to the DtxR/MntR family. In terms of assembly, homodimer.

It is found in the cytoplasm. DNA binding is strongly activated by Mn(2+). Functionally, central regulator of manganese homeostasis. The chain is HTH-type transcriptional regulator MntR from Bacillus cereus (strain AH820).